The following is a 251-amino-acid chain: Small ribosomal subunit protein uS2 (251 aa).

It belongs to the universal ribosomal protein uS2 family.

This Chlorobium chlorochromatii (strain CaD3) protein is Small ribosomal subunit protein uS2.